The primary structure comprises 68 residues: Conotoxin Eb11.7 (68 aa).

Residues 1-26 (MMFRLTSVSCFLLVIVCLNLFQVVLT) form the signal peptide. Cystine bridges form between Cys-29-Cys-43, Cys-36-Cys-48, Cys-42-Cys-52, and Cys-47-Cys-56. Residue Phe-60 is modified to Phenylalanine amide. A propeptide spanning residues 64-68 (ATFQE) is cleaved from the precursor.

It belongs to the conotoxin I2 superfamily. In terms of tissue distribution, expressed by the venom duct.

The protein resides in the secreted. The sequence is that of Conotoxin Eb11.7 from Conus eburneus (Ivory cone).